A 548-amino-acid polypeptide reads, in one-letter code: Chaperonin GroEL (548 aa).

ATP contacts are provided by residues 30 to 33, Lys51, 87 to 91, Gly415, 479 to 481, and Asp495; these read TLGP, DGTTT, and NAA.

The protein belongs to the chaperonin (HSP60) family. In terms of assembly, forms a cylinder of 14 subunits composed of two heptameric rings stacked back-to-back. Interacts with the co-chaperonin GroES.

It is found in the cytoplasm. It catalyses the reaction ATP + H2O + a folded polypeptide = ADP + phosphate + an unfolded polypeptide.. Together with its co-chaperonin GroES, plays an essential role in assisting protein folding. The GroEL-GroES system forms a nano-cage that allows encapsulation of the non-native substrate proteins and provides a physical environment optimized to promote and accelerate protein folding. The chain is Chaperonin GroEL from Vibrio campbellii (strain ATCC BAA-1116).